The chain runs to 340 residues: MRPILLSGHERSLNQIKFNRDGDLLFSVAKDKIVCAWWSANGERLGTYSGHQGAIWTVDVSPNTVLLATGSADNTVRLWNVKTGECVKVWDFPTAVKRVEFNPDGSRLLAVTEKRMGFLGTIAVLDISYGDSQGGALENQADEPSLRITCTESKATVAGWSYLGKYIIAGHEDGSVSQYDGKTGEQLENVQAHEFDHQINDIQFSQDRTYFITASKDKSAKLISSRNLAILKTYVADTPLNSATITPKKDYVILGGGQAAMDVTTTSARQGKFEARFYHKVFEDEIGRVRGHFGPLNTVDVHPNGTAYASGGEDGYVRVHHFDKPYFDFMYEVEREQLRK.

WD repeat units follow at residues 8–47 (GHER…RLGT), 50–91 (GHQG…KVWD), 150–189 (CTES…QLEN), 194–233 (EFDH…ILKT), and 291–330 (GHFG…FDFM).

The protein belongs to the eIF-3 subunit I family. As to quaternary structure, component of the eukaryotic translation initiation factor 3 (eIF-3) complex.

Its subcellular location is the cytoplasm. Functionally, component of the eukaryotic translation initiation factor 3 (eIF-3) complex, which is involved in protein synthesis of a specialized repertoire of mRNAs and, together with other initiation factors, stimulates binding of mRNA and methionyl-tRNAi to the 40S ribosome. The eIF-3 complex specifically targets and initiates translation of a subset of mRNAs involved in cell proliferation. This chain is Eukaryotic translation initiation factor 3 subunit I (tif34), found in Neosartorya fischeri (strain ATCC 1020 / DSM 3700 / CBS 544.65 / FGSC A1164 / JCM 1740 / NRRL 181 / WB 181) (Aspergillus fischerianus).